The chain runs to 227 residues: Cytochrome c oxidase subunit 2 (227 aa).

Over 1–14 (MAYPFQLGLQDASS) the chain is Mitochondrial intermembrane. Residues 15-45 (PIMEELMNFHDHTLMIVFLISSLVLYLMALM) traverse the membrane as a helical segment. Topologically, residues 46-59 (LSTKLIHTSTMDAQ) are mitochondrial matrix. A helical membrane pass occupies residues 60–87 (EVETIWTILPAIILIMIALPSLRILYMM). The Mitochondrial intermembrane portion of the chain corresponds to 88–227 (DEINNPILTV…LFENWSMSMT (140 aa)). Cu cation is bound by residues H161, C196, E198, C200, H204, and M207. Mg(2+) is bound at residue E198.

It belongs to the cytochrome c oxidase subunit 2 family. As to quaternary structure, component of the cytochrome c oxidase (complex IV, CIV), a multisubunit enzyme composed of 14 subunits. The complex is composed of a catalytic core of 3 subunits MT-CO1, MT-CO2 and MT-CO3, encoded in the mitochondrial DNA, and 11 supernumerary subunits COX4I, COX5A, COX5B, COX6A, COX6B, COX6C, COX7A, COX7B, COX7C, COX8 and NDUFA4, which are encoded in the nuclear genome. The complex exists as a monomer or a dimer and forms supercomplexes (SCs) in the inner mitochondrial membrane with NADH-ubiquinone oxidoreductase (complex I, CI) and ubiquinol-cytochrome c oxidoreductase (cytochrome b-c1 complex, complex III, CIII), resulting in different assemblies (supercomplex SCI(1)III(2)IV(1) and megacomplex MCI(2)III(2)IV(2)). Found in a complex with TMEM177, COA6, COX18, COX20, SCO1 and SCO2. Interacts with TMEM177 in a COX20-dependent manner. Interacts with COX20. Interacts with COX16. Cu cation is required as a cofactor.

The protein resides in the mitochondrion inner membrane. The enzyme catalyses 4 Fe(II)-[cytochrome c] + O2 + 8 H(+)(in) = 4 Fe(III)-[cytochrome c] + 2 H2O + 4 H(+)(out). Functionally, component of the cytochrome c oxidase, the last enzyme in the mitochondrial electron transport chain which drives oxidative phosphorylation. The respiratory chain contains 3 multisubunit complexes succinate dehydrogenase (complex II, CII), ubiquinol-cytochrome c oxidoreductase (cytochrome b-c1 complex, complex III, CIII) and cytochrome c oxidase (complex IV, CIV), that cooperate to transfer electrons derived from NADH and succinate to molecular oxygen, creating an electrochemical gradient over the inner membrane that drives transmembrane transport and the ATP synthase. Cytochrome c oxidase is the component of the respiratory chain that catalyzes the reduction of oxygen to water. Electrons originating from reduced cytochrome c in the intermembrane space (IMS) are transferred via the dinuclear copper A center (CU(A)) of subunit 2 and heme A of subunit 1 to the active site in subunit 1, a binuclear center (BNC) formed by heme A3 and copper B (CU(B)). The BNC reduces molecular oxygen to 2 water molecules using 4 electrons from cytochrome c in the IMS and 4 protons from the mitochondrial matrix. The polypeptide is Cytochrome c oxidase subunit 2 (MT-CO2) (Gerbillus gerbillus (Lesser Egyptian gerbil)).